The primary structure comprises 216 residues: MSNPRILIVGPPGAGKGTQSANLAEAYGVEHITTGDALRANKDMDISDMDTEYDTPREYMEAGDLVPDAVVNAIVDEALSQADGFVLDGYPRNLEQAEELEGMTALDVILSLDVSREELVDRLTGRRVCDDCGTNYHVEFNQPEEDGVCDECGGDLIQRDDDNEESVRNRLDVFDDNTAPVIDHYGDHDGFVAIDGEQTPDEVWSEIQDAVDAHTA.

ATP is bound at residue 13–18; it reads GAGKGT. Residues 33-66 form an NMP region; it reads TTGDALRANKDMDISDMDTEYDTPREYMEAGDLV. AMP contacts are provided by residues Thr-34, Arg-39, 64–66, 89–92, and Gln-96; these read DLV and GYPR. The LID stretch occupies residues 125-162; the sequence is GRRVCDDCGTNYHVEFNQPEEDGVCDECGGDLIQRDDD. Residue Arg-126 participates in ATP binding. The Zn(2+) site is built by Cys-129, Cys-132, Cys-149, and Cys-152. Residues Arg-159 and Arg-170 each contribute to the AMP site. Residue Gln-198 coordinates ATP.

It belongs to the adenylate kinase family. Monomer.

It localises to the cytoplasm. It carries out the reaction AMP + ATP = 2 ADP. It functions in the pathway purine metabolism; AMP biosynthesis via salvage pathway; AMP from ADP: step 1/1. Its function is as follows. Catalyzes the reversible transfer of the terminal phosphate group between ATP and AMP. Plays an important role in cellular energy homeostasis and in adenine nucleotide metabolism. The polypeptide is Adenylate kinase (Haloarcula marismortui (strain ATCC 43049 / DSM 3752 / JCM 8966 / VKM B-1809) (Halobacterium marismortui)).